A 455-amino-acid polypeptide reads, in one-letter code: Fumarate hydratase class II (455 aa).

Residues 96 to 98 (SGT), 122 to 125 (HPND), 132 to 134 (SSN), and T180 each bind substrate. H181 serves as the catalytic Proton donor/acceptor. Residue S311 is part of the active site. Residues S312 and 317-319 (KVN) each bind substrate.

It belongs to the class-II fumarase/aspartase family. Fumarase subfamily. In terms of assembly, homotetramer.

Its subcellular location is the cytoplasm. It carries out the reaction (S)-malate = fumarate + H2O. Its pathway is carbohydrate metabolism; tricarboxylic acid cycle; (S)-malate from fumarate: step 1/1. Involved in the TCA cycle. Catalyzes the stereospecific interconversion of fumarate to L-malate. The polypeptide is Fumarate hydratase class II (Listeria monocytogenes serovar 1/2a (strain ATCC BAA-679 / EGD-e)).